A 179-amino-acid chain; its full sequence is Large ribosomal subunit protein bL9 (179 aa).

The interval 156–179 (PEGAPVPVAEEPAAEAEQAEVAAE) is disordered. A compositionally biased stretch (low complexity) spans 157–166 (EGAPVPVAEE). Residues 167 to 179 (PAAEAEQAEVAAE) are compositionally biased toward acidic residues.

Belongs to the bacterial ribosomal protein bL9 family.

In terms of biological role, binds to the 23S rRNA. The protein is Large ribosomal subunit protein bL9 of Porphyromonas gingivalis (strain ATCC 33277 / DSM 20709 / CIP 103683 / JCM 12257 / NCTC 11834 / 2561).